A 440-amino-acid polypeptide reads, in one-letter code: C4-dicarboxylate transport protein (440 aa).

9 consecutive transmembrane segments (helical) span residues 15–35 (VLVA…TGVA), 46–66 (LIKM…IAGM), 78–98 (YALL…LVVV), 146–166 (AFAN…GFAL), 190–210 (IINM…AFTI), 224–244 (LMAC…GGIC), 291–311 (VVGL…SIYL), 332–352 (ITLL…TGSG), and 354–374 (IVLA…LALI). The tract at residues 420-440 (GAPLVDTRPTDDLGVAEGPAR) is disordered.

It belongs to the dicarboxylate/amino acid:cation symporter (DAACS) (TC 2.A.23) family.

It localises to the cell inner membrane. Responsible for the transport of dicarboxylates such as succinate, fumarate, and malate from the periplasm across the membrane. The sequence is that of C4-dicarboxylate transport protein from Pseudomonas putida (strain ATCC 700007 / DSM 6899 / JCM 31910 / BCRC 17059 / LMG 24140 / F1).